A 237-amino-acid chain; its full sequence is Ribosomal RNA small subunit methyltransferase G (237 aa).

S-adenosyl-L-methionine is bound by residues glycine 78, phenylalanine 83, 129 to 130, and arginine 148; that span reads AE. Positions 218–237 are disordered; that stretch reads KKETPRKYPRKAGTPNKKPL.

Belongs to the methyltransferase superfamily. RNA methyltransferase RsmG family.

It is found in the cytoplasm. Functionally, specifically methylates the N7 position of a guanine in 16S rRNA. The chain is Ribosomal RNA small subunit methyltransferase G from Streptococcus uberis (strain ATCC BAA-854 / 0140J).